Here is a 374-residue protein sequence, read N- to C-terminus: Quinolinate synthase (374 aa).

Residues His-53 and Ser-70 each contribute to the iminosuccinate site. Position 116 (Cys-116) interacts with [4Fe-4S] cluster. Residues 148–150 (YMN) and Ser-169 each bind iminosuccinate. Cys-236 is a [4Fe-4S] cluster binding site. Residues 262–264 (HPE) and Thr-279 each bind iminosuccinate. Position 327 (Cys-327) interacts with [4Fe-4S] cluster.

The protein belongs to the quinolinate synthase family. Type 3 subfamily. The cofactor is [4Fe-4S] cluster.

It localises to the cytoplasm. It catalyses the reaction iminosuccinate + dihydroxyacetone phosphate = quinolinate + phosphate + 2 H2O + H(+). It participates in cofactor biosynthesis; NAD(+) biosynthesis; quinolinate from iminoaspartate: step 1/1. Functionally, catalyzes the condensation of iminoaspartate with dihydroxyacetone phosphate to form quinolinate. This chain is Quinolinate synthase, found in Haloarcula marismortui (strain ATCC 43049 / DSM 3752 / JCM 8966 / VKM B-1809) (Halobacterium marismortui).